A 100-amino-acid chain; its full sequence is Large ribosomal subunit protein bL21 (100 aa).

This sequence belongs to the bacterial ribosomal protein bL21 family. In terms of assembly, part of the 50S ribosomal subunit. Contacts protein L20.

This protein binds to 23S rRNA in the presence of protein L20. This Wolbachia pipientis wMel protein is Large ribosomal subunit protein bL21.